A 220-amino-acid polypeptide reads, in one-letter code: Deoxyribose-phosphate aldolase (220 aa).

The active-site Proton donor/acceptor is D89. K151 functions as the Schiff-base intermediate with acetaldehyde in the catalytic mechanism. The active-site Proton donor/acceptor is K180.

The protein belongs to the DeoC/FbaB aldolase family. DeoC type 1 subfamily.

The protein resides in the cytoplasm. The catalysed reaction is 2-deoxy-D-ribose 5-phosphate = D-glyceraldehyde 3-phosphate + acetaldehyde. The protein operates within carbohydrate degradation; 2-deoxy-D-ribose 1-phosphate degradation; D-glyceraldehyde 3-phosphate and acetaldehyde from 2-deoxy-alpha-D-ribose 1-phosphate: step 2/2. Its function is as follows. Catalyzes a reversible aldol reaction between acetaldehyde and D-glyceraldehyde 3-phosphate to generate 2-deoxy-D-ribose 5-phosphate. The protein is Deoxyribose-phosphate aldolase of Streptococcus equi subsp. equi (strain 4047).